Reading from the N-terminus, the 217-residue chain is tRNA (guanine-N(7)-)-methyltransferase (217 aa).

Positions 44, 69, 96, and 118 each coordinate S-adenosyl-L-methionine. The active site involves Asp118. Residue Lys122 participates in substrate binding. Residues 124–129 (RHEKRR) are interaction with RNA. Substrate contacts are provided by residues Asp154 and 191–194 (TEYE).

Belongs to the class I-like SAM-binding methyltransferase superfamily. TrmB family.

The catalysed reaction is guanosine(46) in tRNA + S-adenosyl-L-methionine = N(7)-methylguanosine(46) in tRNA + S-adenosyl-L-homocysteine. It participates in tRNA modification; N(7)-methylguanine-tRNA biosynthesis. Functionally, catalyzes the formation of N(7)-methylguanine at position 46 (m7G46) in tRNA. This chain is tRNA (guanine-N(7)-)-methyltransferase, found in Geobacillus kaustophilus (strain HTA426).